Reading from the N-terminus, the 233-residue chain is Choline-phosphate cytidylyltransferase (233 aa).

CDP-choline contacts are provided by L6, A8, G9, Y80, S85, and A101. D102 is a Mg(2+) binding site. Residue Y187 coordinates CDP-choline. Mg(2+) is bound by residues E213 and D215.

The protein belongs to the LicC/PntC cytidylyltransferase family. Requires Mg(2+) as cofactor.

The enzyme catalyses phosphocholine + CTP + H(+) = CDP-choline + diphosphate. Its pathway is lipopolysaccharide biosynthesis. Cytidylyltransferase involved in the biosynthesis of lipopolysaccharides (LPS), a necessary component and antigenic determinant of the outer membrane that has been shown to be an important factor in the host-parasite interaction in a number of Gram-negative species. Catalyzes the activation of phosphocholine (P-Cho) to CDP-choline (CDP-Cho). LicC is critical for the expression of the 6A2-specific epitope. The protein is Choline-phosphate cytidylyltransferase of Haemophilus influenzae (strain ATCC 51907 / DSM 11121 / KW20 / Rd).